The primary structure comprises 736 residues: Elongation factor 2 (736 aa).

One can recognise a tr-type G domain in the interval glutamate 18 to arginine 261. GTP contacts are provided by residues alanine 27–threonine 34, aspartate 93–histidine 97, and asparagine 147–aspartate 150. Histidine 602 carries the post-translational modification Diphthamide.

It belongs to the TRAFAC class translation factor GTPase superfamily. Classic translation factor GTPase family. EF-G/EF-2 subfamily.

It is found in the cytoplasm. Its function is as follows. Catalyzes the GTP-dependent ribosomal translocation step during translation elongation. During this step, the ribosome changes from the pre-translocational (PRE) to the post-translocational (POST) state as the newly formed A-site-bound peptidyl-tRNA and P-site-bound deacylated tRNA move to the P and E sites, respectively. Catalyzes the coordinated movement of the two tRNA molecules, the mRNA and conformational changes in the ribosome. The polypeptide is Elongation factor 2 (Desulfurococcus amylolyticus (strain DSM 18924 / JCM 16383 / VKM B-2413 / 1221n) (Desulfurococcus kamchatkensis)).